Here is a 924-residue protein sequence, read N- to C-terminus: WSC domain-containing protein ARB_07867 (924 aa).

The first 24 residues, 1-24, serve as a signal peptide directing secretion; that stretch reads MAGILSVVHIIIIFIVRFKSSTDS. Residues 62 to 160 enclose the WSC 1 domain; that stretch reads TWTYLGCYTD…PGRLNLYQNT (99 aa). The N-linked (GlcNAc...) asparagine glycan is linked to asparagine 90. Residues 166 to 190 form a disordered region; the sequence is DTMTTSAPSTETGSPTTTSVPEPTQ. Residues 169 to 189 are compositionally biased toward low complexity; sequence TTSAPSTETGSPTTTSVPEPT. One can recognise a WSC 2 domain in the interval 195–289; the sequence is GWQYSGCYQD…PSRLSVYSKG (95 aa). N-linked (GlcNAc...) asparagine glycosylation is found at asparagine 290, asparagine 333, asparagine 387, asparagine 455, asparagine 552, asparagine 758, and asparagine 833. The WSC 3 domain maps to 307–404; it reads GWKYQGCLQD…GNLITYYRWM (98 aa).

It localises to the secreted. The protein is WSC domain-containing protein ARB_07867 of Arthroderma benhamiae (strain ATCC MYA-4681 / CBS 112371) (Trichophyton mentagrophytes).